The chain runs to 540 residues: Glucose-6-phosphate isomerase (540 aa).

The Proton donor role is filled by E350. Catalysis depends on residues H381 and K503.

The protein belongs to the GPI family.

The protein resides in the cytoplasm. It catalyses the reaction alpha-D-glucose 6-phosphate = beta-D-fructose 6-phosphate. It functions in the pathway carbohydrate biosynthesis; gluconeogenesis. The protein operates within carbohydrate degradation; glycolysis; D-glyceraldehyde 3-phosphate and glycerone phosphate from D-glucose: step 2/4. Functionally, catalyzes the reversible isomerization of glucose-6-phosphate to fructose-6-phosphate. The polypeptide is Glucose-6-phosphate isomerase (Burkholderia pseudomallei (strain 668)).